Consider the following 112-residue polypeptide: 2Fe-2S ferredoxin (112 aa).

In terms of domain architecture, 2Fe-2S ferredoxin-type spans 5 to 107 (IKVTFIINDG…GIKVRLPSAT (103 aa)). [2Fe-2S] cluster-binding residues include C42, C48, C51, and C88.

The protein belongs to the adrenodoxin/putidaredoxin family. Requires [2Fe-2S] cluster as cofactor.

In terms of biological role, ferredoxin are iron-sulfur proteins that transfer electrons in a wide variety of metabolic reactions. This chain is 2Fe-2S ferredoxin (fdxB), found in Rickettsia montanensis.